Reading from the N-terminus, the 32-residue chain is Potassium channel toxin alpha-KTx 10.6 (32 aa).

3 disulfides stabilise this stretch: Cys3–Cys22, Cys8–Cys27, and Cys12–Cys29.

As to expression, expressed by the venom gland.

It localises to the secreted. Functionally, blocks human voltage-gated potassium (Kv) channels Kv1.2/KCNA2 and Kv1.3/KCNA3. Does not block human Kv1.1 at 100nM concentration. The chain is Potassium channel toxin alpha-KTx 10.6 from Centruroides bonito (Scorpion).